The primary structure comprises 218 residues: Ras-related protein Rab-11B (218 aa).

At Gly-2 the chain carries N-acetylglycine. Positions 20, 21, 23, 24, 25, 26, 37, 38, 40, 42, and 43 each coordinate GTP. Ser-25 is a binding site for Mg(2+). Residues 36–47 (FNLESKSTIGVE) carry the Switch 1 motif. Mg(2+)-binding residues include Thr-43 and Asp-66. Residues 67-86 (TAGQERYRAITSAYYRGAVG) carry the Switch 2 motif. Residues Gly-69, Asn-124, Lys-125, Asp-127, Ala-155, and Leu-156 each contribute to the GTP site. A disordered region spans residues 183–218 (DRSAHDESPGNNVVDISVPPTTDGQKSNKLQCCQNM). Positions 201–218 (PPTTDGQKSNKLQCCQNM) are enriched in polar residues. Residues Cys-214 and Cys-215 are each lipidated (S-geranylgeranyl cysteine). At Cys-215 the chain carries Cysteine methyl ester. Positions 216-218 (QNM) are cleaved as a propeptide — removed in mature form.

Belongs to the small GTPase superfamily. Rab family. Mg(2+) serves as cofactor.

The protein resides in the recycling endosome membrane. The protein localises to the cytoplasmic vesicle. Its subcellular location is the secretory vesicle. It localises to the synaptic vesicle membrane. It is found in the phagosome membrane. The catalysed reaction is GTP + H2O = GDP + phosphate + H(+). With respect to regulation, regulated by guanine nucleotide exchange factors (GEFs) which promote the exchange of bound GDP for free GTP. Regulated by GTPase activating proteins (GAPs) which increase the GTP hydrolysis activity. Inhibited by GDP dissociation inhibitors (GDIs) which prevent Rab-GDP dissociation. The small GTPases Rab are key regulators of intracellular membrane trafficking, from the formation of transport vesicles to their fusion with membranes. Rabs cycle between an inactive GDP-bound form and an active GTP-bound form that is able to recruit to membranes different set of downstream effectors directly responsible for vesicle formation, movement, tethering and fusion. That Rab plays a role in endocytic recycling, regulating apical recycling of several transmembrane proteins including cystic fibrosis transmembrane conductance regulator/CFTR, epithelial sodium channel/ENaC, potassium voltage-gated channel, and voltage-dependent L-type calcium channel. May also regulate constitutive and regulated secretion, like insulin granule exocytosis. Required for melanosome transport and release from melanocytes. Also regulates V-ATPase intracellular transport in response to extracellular acidosis. This chain is Ras-related protein Rab-11B, found in Diplobatis ommata (Ocellated electric ray).